The following is a 174-amino-acid chain: Protein C (174 aa).

This sequence belongs to the morbillivirus protein C family.

This chain is Protein C (P/V/C), found in Canine distemper virus (strain Onderstepoort) (CDV).